Reading from the N-terminus, the 295-residue chain is GTPase Era (295 aa).

The Era-type G domain occupies 4–171 (KSGFVTIIGR…IKQIVSFLPE (168 aa)). Positions 12–19 (GRPNVGKS) are G1. 12–19 (GRPNVGKS) contributes to the GTP binding site. Positions 38 to 42 (QTTRN) are G2. Residues 59–62 (DTPG) form a G3 region. Residues 59 to 63 (DTPGI) and 121 to 124 (NKID) contribute to the GTP site. The interval 121–124 (NKID) is G4. Positions 150–152 (ISA) are G5. The 79-residue stretch at 202–280 (LDQEIPHGIA…FLELWVKVNE (79 aa)) folds into the KH type-2 domain.

Belongs to the TRAFAC class TrmE-Era-EngA-EngB-Septin-like GTPase superfamily. Era GTPase family. In terms of assembly, monomer.

The protein localises to the cytoplasm. It is found in the cell membrane. Its function is as follows. An essential GTPase that binds both GDP and GTP, with rapid nucleotide exchange. Plays a role in 16S rRNA processing and 30S ribosomal subunit biogenesis and possibly also in cell cycle regulation and energy metabolism. The polypeptide is GTPase Era (Alkaliphilus metalliredigens (strain QYMF)).